The following is a 131-amino-acid chain: Biogenesis of lysosome-related organelles complex 1 subunit 5 (131 aa).

Belongs to the BLOC1S5 family. As to quaternary structure, component of the biogenesis of lysosome-related organelles complex-1 (BLOC-1) composed at least of blos-1, blos-2, blos-4, dsbn-1, glo-2, mutd-1 and snpn-1.

In terms of biological role, component of the biogenesis of lysosome-related organelles complex-1 (BLOC-1) involved in gut granule biogenesis. This chain is Biogenesis of lysosome-related organelles complex 1 subunit 5 (mutd-1), found in Caenorhabditis elegans.